Consider the following 631-residue polypeptide: uncharacterized protein (631 aa).

Polar residues predominate over residues 1 to 19 (MSKMGSSSMGELQDGITQE). A disordered region spans residues 1-92 (MSKMGSSSMG…EENYPRLQTT (92 aa)). A compositionally biased stretch (basic residues) spans 67 to 76 (KKKKKKKLKK). An Exonuclease domain is found at 277–426 (LAIDCEMVRT…EDALACVDLL (150 aa)). Polar residues predominate over residues 517–526 (ANRNTKQENN). Residues 517 to 540 (ANRNTKQENNSDTDTENDSVEEDQ) form a disordered region. The span at 527–540 (SDTDTENDSVEEDQ) shows a compositional bias: acidic residues.

Belongs to the REXO1/REXO3 family.

It is found in the nucleus. This is an uncharacterized protein from Schizosaccharomyces pombe (strain 972 / ATCC 24843) (Fission yeast).